A 156-amino-acid chain; its full sequence is Small ribosomal subunit protein uS7 (156 aa).

The protein belongs to the universal ribosomal protein uS7 family. Part of the 30S ribosomal subunit. Contacts proteins S9 and S11.

Its function is as follows. One of the primary rRNA binding proteins, it binds directly to 16S rRNA where it nucleates assembly of the head domain of the 30S subunit. Is located at the subunit interface close to the decoding center, probably blocks exit of the E-site tRNA. This is Small ribosomal subunit protein uS7 from Desulfovibrio desulfuricans (strain ATCC 27774 / DSM 6949 / MB).